The primary structure comprises 373 residues: Dual-specificity RNA methyltransferase RlmN (373 aa).

Catalysis depends on glutamate 94, which acts as the Proton acceptor. A Radical SAM core domain is found at 100–339 (EDDRATLCVS…VIVRKTRGDD (240 aa)). A disulfide bond links cysteine 107 and cysteine 344. [4Fe-4S] cluster contacts are provided by cysteine 114, cysteine 118, and cysteine 121. S-adenosyl-L-methionine is bound by residues 168–169 (GE), serine 200, 222–224 (SIH), and asparagine 301. Cysteine 344 acts as the S-methylcysteine intermediate in catalysis.

Belongs to the radical SAM superfamily. RlmN family. It depends on [4Fe-4S] cluster as a cofactor.

The protein resides in the cytoplasm. It catalyses the reaction adenosine(2503) in 23S rRNA + 2 reduced [2Fe-2S]-[ferredoxin] + 2 S-adenosyl-L-methionine = 2-methyladenosine(2503) in 23S rRNA + 5'-deoxyadenosine + L-methionine + 2 oxidized [2Fe-2S]-[ferredoxin] + S-adenosyl-L-homocysteine. The enzyme catalyses adenosine(37) in tRNA + 2 reduced [2Fe-2S]-[ferredoxin] + 2 S-adenosyl-L-methionine = 2-methyladenosine(37) in tRNA + 5'-deoxyadenosine + L-methionine + 2 oxidized [2Fe-2S]-[ferredoxin] + S-adenosyl-L-homocysteine. Functionally, specifically methylates position 2 of adenine 2503 in 23S rRNA and position 2 of adenine 37 in tRNAs. m2A2503 modification seems to play a crucial role in the proofreading step occurring at the peptidyl transferase center and thus would serve to optimize ribosomal fidelity. This chain is Dual-specificity RNA methyltransferase RlmN, found in Shewanella pealeana (strain ATCC 700345 / ANG-SQ1).